Reading from the N-terminus, the 482-residue chain is PAN domain-containing protein At5g03700 (482 aa).

The first 31 residues, 1–31, serve as a signal peptide directing secretion; the sequence is MEGLCLNSFTRVLLLLFVFLVFSHKWQRVNA. The PAN domain occupies 330–411; it reads CDKTTEFKVV…SKLGYFKVRE (82 aa). 2 disulfide bridges follow: cysteine 363-cysteine 385 and cysteine 367-cysteine 373. A helical membrane pass occupies residues 425 to 445; that stretch reads GMSLLAVIALVLMVAMVYVGF.

The protein resides in the membrane. This Arabidopsis thaliana (Mouse-ear cress) protein is PAN domain-containing protein At5g03700.